We begin with the raw amino-acid sequence, 118 residues long: Large ribosomal subunit protein bL19 (118 aa).

It belongs to the bacterial ribosomal protein bL19 family.

In terms of biological role, this protein is located at the 30S-50S ribosomal subunit interface and may play a role in the structure and function of the aminoacyl-tRNA binding site. In Campylobacter fetus subsp. fetus (strain 82-40), this protein is Large ribosomal subunit protein bL19.